The primary structure comprises 83 residues: MQNEAGEYVDLYIPRKCSTSNRIIHAKDHASIQINLAIVDEQSGRATGETKPYAICGAIRRMGESDDCITRLAKDDGYIPKDF.

The protein belongs to the eukaryotic ribosomal protein eS21 family. Component of the 40S small ribosomal subunit.

The protein resides in the cytoplasm. It is found in the cytosol. Its subcellular location is the rough endoplasmic reticulum. In Ixodes scapularis (Black-legged tick), this protein is Small ribosomal subunit protein eS21 (RpS21).